The following is a 428-amino-acid chain: Tryptophan synthase beta chain (428 aa).

Position 100 is an N6-(pyridoxal phosphate)lysine (Lys100).

Belongs to the TrpB family. In terms of assembly, tetramer of two alpha and two beta chains. Requires pyridoxal 5'-phosphate as cofactor.

It carries out the reaction (1S,2R)-1-C-(indol-3-yl)glycerol 3-phosphate + L-serine = D-glyceraldehyde 3-phosphate + L-tryptophan + H2O. The protein operates within amino-acid biosynthesis; L-tryptophan biosynthesis; L-tryptophan from chorismate: step 5/5. Functionally, the beta subunit is responsible for the synthesis of L-tryptophan from indole and L-serine. This is Tryptophan synthase beta chain from Streptomyces avermitilis (strain ATCC 31267 / DSM 46492 / JCM 5070 / NBRC 14893 / NCIMB 12804 / NRRL 8165 / MA-4680).